The sequence spans 72 residues: Small ribosomal subunit protein bS18 (72 aa).

The protein belongs to the bacterial ribosomal protein bS18 family. In terms of assembly, part of the 30S ribosomal subunit. Forms a tight heterodimer with protein bS6.

Binds as a heterodimer with protein bS6 to the central domain of the 16S rRNA, where it helps stabilize the platform of the 30S subunit. In Trichodesmium erythraeum (strain IMS101), this protein is Small ribosomal subunit protein bS18.